A 523-amino-acid chain; its full sequence is GMP synthase [glutamine-hydrolyzing] (523 aa).

The Glutamine amidotransferase type-1 domain maps to 8 to 205; sequence KILILDFGSQ…VVKICGCERN (198 aa). Residue cysteine 85 is the Nucleophile of the active site. Catalysis depends on residues histidine 179 and glutamate 181. Residues 206–398 form the GMPS ATP-PPase domain; sequence WTPENIIEDA…LGLPAEMLNR (193 aa). 233-239 is an ATP binding site; it reads SGGVDSS.

Homodimer.

The enzyme catalyses XMP + L-glutamine + ATP + H2O = GMP + L-glutamate + AMP + diphosphate + 2 H(+). It participates in purine metabolism; GMP biosynthesis; GMP from XMP (L-Gln route): step 1/1. Functionally, catalyzes the synthesis of GMP from XMP. The chain is GMP synthase [glutamine-hydrolyzing] from Pasteurella multocida (strain Pm70).